The primary structure comprises 277 residues: Putative phosphoenolpyruvate synthase regulatory protein (277 aa).

157 to 164 (GVSRCGKT) lines the ADP pocket.

This sequence belongs to the pyruvate, phosphate/water dikinase regulatory protein family. PSRP subfamily.

It carries out the reaction [pyruvate, water dikinase] + ADP = [pyruvate, water dikinase]-phosphate + AMP + H(+). It catalyses the reaction [pyruvate, water dikinase]-phosphate + phosphate + H(+) = [pyruvate, water dikinase] + diphosphate. Bifunctional serine/threonine kinase and phosphorylase involved in the regulation of the phosphoenolpyruvate synthase (PEPS) by catalyzing its phosphorylation/dephosphorylation. In Klebsiella pneumoniae subsp. pneumoniae (strain ATCC 700721 / MGH 78578), this protein is Putative phosphoenolpyruvate synthase regulatory protein.